The chain runs to 96 residues: Small ribosomal subunit protein bS6 (96 aa).

Belongs to the bacterial ribosomal protein bS6 family.

Functionally, binds together with bS18 to 16S ribosomal RNA. In Synechococcus sp. (strain JA-2-3B'a(2-13)) (Cyanobacteria bacterium Yellowstone B-Prime), this protein is Small ribosomal subunit protein bS6.